We begin with the raw amino-acid sequence, 212 residues long: External core antigen (212 aa).

A signal peptide spans 1-19 (MQLFHLCLIISCSCPTVQA). An HBEAG region spans residues 25-27 (GWL). Residues 172-212 (LPETTVVRRRGRSPRRRTPSPRRRRSKSPRRRRSQSRESQC) form a disordered region. Residues 178-205 (VRRRGRSPRRRTPSPRRRRSKSPRRRRS) are compositionally biased toward basic residues. The 1; half-length repeat unit spans residues 184–189 (SPRRRT). A 3 X 7 AA repeats of S-P-R-R-R-R-S region spans residues 184-205 (SPRRRTPSPRRRRSKSPRRRRS). Residues 184–212 (SPRRRTPSPRRRRSKSPRRRRSQSRESQC) constitute a propeptide that is removed on maturation. A run of 2 repeats spans residues 191–197 (SPRRRRS) and 199–205 (SPRRRRS).

It belongs to the orthohepadnavirus precore antigen family. As to quaternary structure, homodimerizes. Phosphorylated. In terms of processing, cleaved by host furin.

It localises to the secreted. It is found in the host nucleus. In terms of biological role, may regulate immune response to the intracellular capsid in acting as a T-cell tolerogen, by having an immunoregulatory effect which prevents destruction of infected cells by cytotoxic T-cells. This immune regulation may predispose to chronicity during perinatal infections and prevent severe liver injury during adult infections. This Hepatitis B virus genotype C subtype adr (isolate Japan/Nishioka/1983) (HBV-C) protein is External core antigen.